Consider the following 304-residue polypeptide: Methionyl-tRNA formyltransferase (304 aa).

110 to 113 (SLLP) is a binding site for (6S)-5,6,7,8-tetrahydrofolate.

The protein belongs to the Fmt family.

The catalysed reaction is L-methionyl-tRNA(fMet) + (6R)-10-formyltetrahydrofolate = N-formyl-L-methionyl-tRNA(fMet) + (6S)-5,6,7,8-tetrahydrofolate + H(+). Attaches a formyl group to the free amino group of methionyl-tRNA(fMet). The formyl group appears to play a dual role in the initiator identity of N-formylmethionyl-tRNA by promoting its recognition by IF2 and preventing the misappropriation of this tRNA by the elongation apparatus. The polypeptide is Methionyl-tRNA formyltransferase (Sulfurovum sp. (strain NBC37-1)).